Consider the following 285-residue polypeptide: Shikimate dehydrogenase (NADP(+)) (285 aa).

Shikimate-binding positions include serine 19 to serine 21 and threonine 66. Lysine 70 acts as the Proton acceptor in catalysis. Residues asparagine 91 and aspartate 107 each contribute to the shikimate site. NADP(+) is bound by residues glycine 129–alanine 133 and leucine 228. Tyrosine 230 contributes to the shikimate binding site. Residue glycine 251 participates in NADP(+) binding.

Belongs to the shikimate dehydrogenase family. Homodimer.

It carries out the reaction shikimate + NADP(+) = 3-dehydroshikimate + NADPH + H(+). It participates in metabolic intermediate biosynthesis; chorismate biosynthesis; chorismate from D-erythrose 4-phosphate and phosphoenolpyruvate: step 4/7. Involved in the biosynthesis of the chorismate, which leads to the biosynthesis of aromatic amino acids. Catalyzes the reversible NADPH linked reduction of 3-dehydroshikimate (DHSA) to yield shikimate (SA). In Prochlorococcus marinus subsp. pastoris (strain CCMP1986 / NIES-2087 / MED4), this protein is Shikimate dehydrogenase (NADP(+)).